Reading from the N-terminus, the 617-residue chain is Procollagen galactosyltransferase 1 (617 aa).

The first 31 residues, 1-31 (MAALPRGSRGLPLLPLLLLLPPLGGPRGADG), serve as a signal peptide directing secretion. Asn-91, Asn-179, and Asn-376 each carry an N-linked (GlcNAc...) asparagine glycan. The segment covering 582-601 (DRAKSQKMREQQALSREAKN) has biased composition (basic and acidic residues). The disordered stretch occupies residues 582–617 (DRAKSQKMREQQALSREAKNSDVLQSPLDSTARDEL). The Prevents secretion from ER motif lies at 614–617 (RDEL).

Belongs to the glycosyltransferase 25 family. N-glycosylated.

The protein localises to the endoplasmic reticulum lumen. The catalysed reaction is (5R)-5-hydroxy-L-lysyl-[collagen] + UDP-alpha-D-galactose = (5R)-5-O-(beta-D-galactosyl)-5-hydroxy-L-lysyl-[collagen] + UDP + H(+). In terms of biological role, beta-galactosyltransferase that transfers beta-galactose to hydroxylysine residues of type I collagen. By acting on collagen glycosylation, facilitates the formation of collagen triple helix. Also involved in the biosynthesis of collagen type IV. This chain is Procollagen galactosyltransferase 1 (Colgalt1), found in Mus musculus (Mouse).